The following is a 443-amino-acid chain: Signal recognition particle 54 kDa protein (443 aa).

Residues 104–111, 184–188, and 242–245 each bind GTP; these read GLQGSGKT, DTAGR, and TKLD.

This sequence belongs to the GTP-binding SRP family. SRP54 subfamily. In terms of assembly, part of the signal recognition particle protein translocation system, which is composed of SRP and FtsY. Archaeal SRP consists of a 7S RNA molecule of 300 nucleotides and two protein subunits: SRP54 and SRP19.

The protein localises to the cytoplasm. It carries out the reaction GTP + H2O = GDP + phosphate + H(+). Functionally, involved in targeting and insertion of nascent membrane proteins into the cytoplasmic membrane. Binds to the hydrophobic signal sequence of the ribosome-nascent chain (RNC) as it emerges from the ribosomes. The SRP-RNC complex is then targeted to the cytoplasmic membrane where it interacts with the SRP receptor FtsY. The protein is Signal recognition particle 54 kDa protein of Methanosarcina mazei (strain ATCC BAA-159 / DSM 3647 / Goe1 / Go1 / JCM 11833 / OCM 88) (Methanosarcina frisia).